The sequence spans 390 residues: Dual-specificity RNA methyltransferase RlmN (390 aa).

Glutamate 110 serves as the catalytic Proton acceptor. In terms of domain architecture, Radical SAM core spans 116–355; the sequence is EADRATLCVS…VIIRKTRGDD (240 aa). Cysteine 123 and cysteine 360 are joined by a disulfide. [4Fe-4S] cluster is bound by residues cysteine 130, cysteine 134, and cysteine 137. S-adenosyl-L-methionine-binding positions include 184–185, serine 216, 238–240, and asparagine 317; these read GE and SLH. Cysteine 360 (S-methylcysteine intermediate) is an active-site residue.

The protein belongs to the radical SAM superfamily. RlmN family. Requires [4Fe-4S] cluster as cofactor.

Its subcellular location is the cytoplasm. The catalysed reaction is adenosine(2503) in 23S rRNA + 2 reduced [2Fe-2S]-[ferredoxin] + 2 S-adenosyl-L-methionine = 2-methyladenosine(2503) in 23S rRNA + 5'-deoxyadenosine + L-methionine + 2 oxidized [2Fe-2S]-[ferredoxin] + S-adenosyl-L-homocysteine. It catalyses the reaction adenosine(37) in tRNA + 2 reduced [2Fe-2S]-[ferredoxin] + 2 S-adenosyl-L-methionine = 2-methyladenosine(37) in tRNA + 5'-deoxyadenosine + L-methionine + 2 oxidized [2Fe-2S]-[ferredoxin] + S-adenosyl-L-homocysteine. Functionally, specifically methylates position 2 of adenine 2503 in 23S rRNA and position 2 of adenine 37 in tRNAs. m2A2503 modification seems to play a crucial role in the proofreading step occurring at the peptidyl transferase center and thus would serve to optimize ribosomal fidelity. The sequence is that of Dual-specificity RNA methyltransferase RlmN from Haemophilus influenzae (strain PittEE).